The sequence spans 396 residues: Ribosomal RNA large subunit methyltransferase G (396 aa).

This sequence belongs to the methyltransferase superfamily. RlmG family.

It is found in the cytoplasm. It catalyses the reaction guanosine(1835) in 23S rRNA + S-adenosyl-L-methionine = N(2)-methylguanosine(1835) in 23S rRNA + S-adenosyl-L-homocysteine + H(+). In terms of biological role, specifically methylates the guanine in position 1835 (m2G1835) of 23S rRNA. This chain is Ribosomal RNA large subunit methyltransferase G, found in Yersinia enterocolitica serotype O:8 / biotype 1B (strain NCTC 13174 / 8081).